The following is a 269-amino-acid chain: Phosphatidylglycerol--prolipoprotein diacylglyceryl transferase (269 aa).

The next 7 membrane-spanning stretches (helical) occupy residues 10–30 (VALA…LIGI), 56–76 (MVFW…VLFY), 92–112 (WKGG…AWWF), 120–140 (FFEL…AGRI), 174–194 (PSQL…LWLF), 202–222 (MAVS…VEFV), and 237–257 (LTMG…LIWL). Residue R139 participates in a 1,2-diacyl-sn-glycero-3-phospho-(1'-sn-glycerol) binding.

Belongs to the Lgt family.

It localises to the cell inner membrane. It catalyses the reaction L-cysteinyl-[prolipoprotein] + a 1,2-diacyl-sn-glycero-3-phospho-(1'-sn-glycerol) = an S-1,2-diacyl-sn-glyceryl-L-cysteinyl-[prolipoprotein] + sn-glycerol 1-phosphate + H(+). It functions in the pathway protein modification; lipoprotein biosynthesis (diacylglyceryl transfer). Functionally, catalyzes the transfer of the diacylglyceryl group from phosphatidylglycerol to the sulfhydryl group of the N-terminal cysteine of a prolipoprotein, the first step in the formation of mature lipoproteins. The sequence is that of Phosphatidylglycerol--prolipoprotein diacylglyceryl transferase from Pseudomonas fluorescens (strain ATCC BAA-477 / NRRL B-23932 / Pf-5).